The following is a 248-amino-acid chain: MGVQFPALKTMVTVFLLLMGNMSPVVMKSSIPLRKVKMVASKVVTPGSSLYGVALKDLADTSYNITCTLQVENWIRYRLIVPSVQMVYGVVTTTPIAIEPAKREAFAVRKTSDTASGVAGSVSWELEKARRRFVIMWSVPDNFNSFGYWMGLGMTREGLVDPDKDWYGQMYSGSSDGDLTFTRKDFSYNTDSIIYSNDKFEVEGDMTNTQHAQIKIVIRPSSNNWKDLAPKIRRKLKKKPKPARQRDN.

Positions 1–23 (MGVQFPALKTMVTVFLLLMGNMS) are cleaved as a signal peptide. The N-terminal region stretch occupies residues 45–64 (TPGSSLYGVALKDLADTSYN). Glycine 120, serine 138, proline 140, tyrosine 167, and tyrosine 171 together coordinate phosphocholine.

Belongs to the actinoporin family. Conoidea subfamily. As to quaternary structure, octamer or nonamer in membranes. Monomer in the soluble state. Post-translationally, 9 isoforms are detected in the injectable venom, mainly corresponding to different oxidative states. As to expression, expressed by the venom duct.

It is found in the secreted. The protein localises to the nematocyst. The protein resides in the target cell membrane. Pore-forming protein that forms pores of around 1 nm and causes cardiac stimulation and cytolysis. This chain is Conoporin-Cn1, found in Conus consors (Singed cone).